Here is a 166-residue protein sequence, read N- to C-terminus: Short form salivary protein D7R1 (166 aa).

Positions 1 to 21 (MFRKVFSVALVTCGLLVIVQA) are cleaved as a signal peptide.

It belongs to the PBP/GOBP family. In terms of assembly, interacts with host coagulation factor XII (F12) (inactive and activated) (via amino acids 1-77). Interacts with host high molecular weight kininogen (KNG1) (via amino acids 402-532). In terms of tissue distribution, female salivary gland (at protein level).

Its subcellular location is the secreted. Zn(2+) modulates binding to host coagulation factor XII (F12) and high molecular weight kininogen (KNG1). Salivary protein with anticoagulant activity that targets the intrinsic blood coagulation pathway in the host. Inhibits activation of the host plasma contact system by preventing the reciprocal activation of host coagulation factor XII (F12) and prekallikrein (KLKB1). Attenuates generation of bradykinin in host plasma. May bind and sequester different mediators involved in the host response, such as serotonin and histamine. In Anopheles stephensi (Indo-Pakistan malaria mosquito), this protein is Short form salivary protein D7R1.